We begin with the raw amino-acid sequence, 237 residues long: Purine nucleoside phosphorylase DeoD-type (237 aa).

Histidine 4 serves as a coordination point for a purine D-ribonucleoside. Phosphate is bound by residues glycine 20, arginine 24, arginine 43, and 87 to 90 (RVGT). A purine D-ribonucleoside contacts are provided by residues 179–181 (EME) and 203–204 (SD). Aspartate 204 serves as the catalytic Proton donor.

Belongs to the PNP/UDP phosphorylase family. As to quaternary structure, homohexamer; trimer of homodimers.

The catalysed reaction is a purine D-ribonucleoside + phosphate = a purine nucleobase + alpha-D-ribose 1-phosphate. It carries out the reaction a purine 2'-deoxy-D-ribonucleoside + phosphate = a purine nucleobase + 2-deoxy-alpha-D-ribose 1-phosphate. Its function is as follows. Catalyzes the reversible phosphorolytic breakdown of the N-glycosidic bond in the beta-(deoxy)ribonucleoside molecules, with the formation of the corresponding free purine bases and pentose-1-phosphate. The chain is Purine nucleoside phosphorylase DeoD-type from Streptococcus pyogenes serotype M12 (strain MGAS2096).